A 480-amino-acid chain; its full sequence is EGF-like repeat and discoidin I-like domain-containing protein 3 (480 aa).

The first 23 residues, 1–23 (MKHLVAAWLLVGLSLGVPQFGKG), serve as a signal peptide directing secretion. Residues 24–60 (DICNPNPCENGGICLSGLADDSFSCECPEGFAGPNCS) form the EGF-like 1 domain. Intrachain disulfides connect Cys-26–Cys-37, Cys-31–Cys-48, and Cys-50–Cys-59. Thr-73 carries an O-linked (GalNAc...) threonine glycan. 2 consecutive EGF-like domains span residues 74 to 117 (SAGP…IHCQ) and 119 to 155 (NINE…RNCQ). Disulfide bonds link Cys-78–Cys-89, Cys-83–Cys-105, and Cys-107–Cys-116. Thr-88 carries O-linked (Fuc...) threonine glycosylation. The short motif at 96–98 (RGD) is the Cell attachment site element. Residues Asn-119, Ile-120, and Glu-122 each coordinate Ca(2+). Cystine bridges form between Cys-123–Cys-134, Cys-128–Cys-143, Cys-145–Cys-154, Cys-158–Cys-314, Cys-301–Cys-305, and Cys-319–Cys-476. 2 residues coordinate Ca(2+): Asp-136 and Leu-137. Asn-140 carries an N-linked (GlcNAc...) asparagine glycan. 2 F5/8 type C domains span residues 158 to 314 (CSGP…LLGC) and 319 to 476 (CSEP…LLGC).

Expressed in angioblasts and early endothelial cells. By embryonic day 13.5, also expressed in a restricted group of non-endothelial cells including chondrocytes and retinal neurons.

It is found in the secreted. Functionally, promotes adhesion of endothelial cells through interaction with the alpha-v/beta-3 integrin receptor. Inhibits formation of vascular-like structures. May be involved in regulation of vascular morphogenesis of remodeling in embryonic development. The sequence is that of EGF-like repeat and discoidin I-like domain-containing protein 3 (Edil3) from Mus musculus (Mouse).